Consider the following 379-residue polypeptide: 3-dehydroquinate synthase (379 aa).

NAD(+) contacts are provided by residues 67–72, 101–105, 125–126, K138, and K147; these read PGEKNK, GIVLD, and TT. Zn(2+)-binding residues include E180, H242, and H258.

The protein belongs to the sugar phosphate cyclases superfamily. Dehydroquinate synthase family. NAD(+) serves as cofactor. The cofactor is Co(2+). Zn(2+) is required as a cofactor.

It localises to the cytoplasm. It catalyses the reaction 7-phospho-2-dehydro-3-deoxy-D-arabino-heptonate = 3-dehydroquinate + phosphate. It functions in the pathway metabolic intermediate biosynthesis; chorismate biosynthesis; chorismate from D-erythrose 4-phosphate and phosphoenolpyruvate: step 2/7. Catalyzes the conversion of 3-deoxy-D-arabino-heptulosonate 7-phosphate (DAHP) to dehydroquinate (DHQ). The chain is 3-dehydroquinate synthase from Chlamydia felis (strain Fe/C-56) (Chlamydophila felis).